The following is a 130-amino-acid chain: Prefoldin subunit alpha (130 aa).

Belongs to the prefoldin subunit alpha family. As to quaternary structure, heterohexamer of two alpha and four beta subunits.

The protein resides in the cytoplasm. Its function is as follows. Molecular chaperone capable of stabilizing a range of proteins. Seems to fulfill an ATP-independent, HSP70-like function in archaeal de novo protein folding. This chain is Prefoldin subunit alpha (pfdA), found in Thermoplasma acidophilum (strain ATCC 25905 / DSM 1728 / JCM 9062 / NBRC 15155 / AMRC-C165).